Reading from the N-terminus, the 473-residue chain is Aspartyl/glutamyl-tRNA(Asn/Gln) amidotransferase subunit B (473 aa).

It belongs to the GatB/GatE family. GatB subfamily. In terms of assembly, heterotrimer of A, B and C subunits.

The catalysed reaction is L-glutamyl-tRNA(Gln) + L-glutamine + ATP + H2O = L-glutaminyl-tRNA(Gln) + L-glutamate + ADP + phosphate + H(+). The enzyme catalyses L-aspartyl-tRNA(Asn) + L-glutamine + ATP + H2O = L-asparaginyl-tRNA(Asn) + L-glutamate + ADP + phosphate + 2 H(+). Allows the formation of correctly charged Asn-tRNA(Asn) or Gln-tRNA(Gln) through the transamidation of misacylated Asp-tRNA(Asn) or Glu-tRNA(Gln) in organisms which lack either or both of asparaginyl-tRNA or glutaminyl-tRNA synthetases. The reaction takes place in the presence of glutamine and ATP through an activated phospho-Asp-tRNA(Asn) or phospho-Glu-tRNA(Gln). The chain is Aspartyl/glutamyl-tRNA(Asn/Gln) amidotransferase subunit B from Levilactobacillus brevis (strain ATCC 367 / BCRC 12310 / CIP 105137 / JCM 1170 / LMG 11437 / NCIMB 947 / NCTC 947) (Lactobacillus brevis).